The primary structure comprises 964 residues: Translation initiation factor IF-2 (964 aa).

Basic and acidic residues predominate over residues 1 to 10 (MSDKTNDDKT). The segment at 1-379 (MSDKTNDDKT…SQMQETREKI (379 aa)) is disordered. Positions 27 to 37 (EQSTVRQNFSH) are enriched in polar residues. Residues 77 to 102 (APAASTPAPAQAAQPAQAAPVVRAPA) are compositionally biased toward low complexity. A compositionally biased stretch (pro residues) spans 103–113 (PATPAPKPAAP). Residues 114–140 (AAPVTKPHVAQQRPAQQRPGGQQAQRP) show a composition bias toward low complexity. 2 stretches are compositionally biased toward basic and acidic residues: residues 156 to 227 (SEMD…EAAK) and 234 to 243 (ARTERRDDAR). Low complexity predominate over residues 250-278 (RPQQAGRPQGNRPPQGGRPQQGGPRPAAP). Positions 323–338 (PEVRAPKVVKTEDDRR) are enriched in basic and acidic residues. Positions 462–629 (SRPPVVTIMG…AILLQAEILD (168 aa)) constitute a tr-type G domain. The G1 stretch occupies residues 471 to 478 (GHVDHGKT). GTP is bound at residue 471 to 478 (GHVDHGKT). The interval 496 to 500 (GITQH) is G2. Residues 517 to 520 (DTPG) are G3. Residues 517 to 521 (DTPGH) and 571 to 574 (NKID) each bind GTP. The segment at 571–574 (NKID) is G4. Residues 607–609 (SAK) are G5.

Belongs to the TRAFAC class translation factor GTPase superfamily. Classic translation factor GTPase family. IF-2 subfamily.

Its subcellular location is the cytoplasm. Functionally, one of the essential components for the initiation of protein synthesis. Protects formylmethionyl-tRNA from spontaneous hydrolysis and promotes its binding to the 30S ribosomal subunits. Also involved in the hydrolysis of GTP during the formation of the 70S ribosomal complex. This chain is Translation initiation factor IF-2, found in Brucella anthropi (strain ATCC 49188 / DSM 6882 / CCUG 24695 / JCM 21032 / LMG 3331 / NBRC 15819 / NCTC 12168 / Alc 37) (Ochrobactrum anthropi).